A 750-amino-acid chain; its full sequence is Ribosomal RNA large subunit methyltransferase K/L (750 aa).

In terms of domain architecture, THUMP spans 46–157 (TAYRLCLWSR…RGEAILSLDL (112 aa)).

It belongs to the methyltransferase superfamily. RlmKL family.

The protein localises to the cytoplasm. It carries out the reaction guanosine(2445) in 23S rRNA + S-adenosyl-L-methionine = N(2)-methylguanosine(2445) in 23S rRNA + S-adenosyl-L-homocysteine + H(+). The enzyme catalyses guanosine(2069) in 23S rRNA + S-adenosyl-L-methionine = N(2)-methylguanosine(2069) in 23S rRNA + S-adenosyl-L-homocysteine + H(+). Functionally, specifically methylates the guanine in position 2445 (m2G2445) and the guanine in position 2069 (m7G2069) of 23S rRNA. This chain is Ribosomal RNA large subunit methyltransferase K/L, found in Pseudomonas syringae pv. syringae (strain B728a).